We begin with the raw amino-acid sequence, 181 residues long: Acireductone dioxygenase (181 aa).

Residues His-97, His-99, Glu-103, and His-141 each coordinate Fe(2+). The Ni(2+) site is built by His-97, His-99, Glu-103, and His-141.

Belongs to the acireductone dioxygenase (ARD) family. In terms of assembly, monomer. The cofactor is Fe(2+). It depends on Ni(2+) as a cofactor.

The enzyme catalyses 1,2-dihydroxy-5-(methylsulfanyl)pent-1-en-3-one + O2 = 3-(methylsulfanyl)propanoate + CO + formate + 2 H(+). It catalyses the reaction 1,2-dihydroxy-5-(methylsulfanyl)pent-1-en-3-one + O2 = 4-methylsulfanyl-2-oxobutanoate + formate + 2 H(+). It functions in the pathway amino-acid biosynthesis; L-methionine biosynthesis via salvage pathway; L-methionine from S-methyl-5-thio-alpha-D-ribose 1-phosphate: step 5/6. Its function is as follows. Catalyzes 2 different reactions between oxygen and the acireductone 1,2-dihydroxy-3-keto-5-methylthiopentene (DHK-MTPene) depending upon the metal bound in the active site. Fe-containing acireductone dioxygenase (Fe-ARD) produces formate and 2-keto-4-methylthiobutyrate (KMTB), the alpha-ketoacid precursor of methionine in the methionine recycle pathway. Ni-containing acireductone dioxygenase (Ni-ARD) produces methylthiopropionate, carbon monoxide and formate, and does not lie on the methionine recycle pathway. The protein is Acireductone dioxygenase of Pseudomonas fluorescens (strain Pf0-1).